A 475-amino-acid chain; its full sequence is Bifunctional aspartate aminotransferase and glutamate/aspartate-prephenate aminotransferase (475 aa).

The N-terminal 55 residues, methionine 1–methionine 55, are a transit peptide targeting the chloroplast. The L-aspartate site is built by glycine 107, tryptophan 193, and asparagine 243. The residue at position 306 (lysine 306) is an N6-(pyridoxal phosphate)lysine. An L-aspartate-binding site is contributed by arginine 445.

Belongs to the class-I pyridoxal-phosphate-dependent aminotransferase family. In terms of assembly, homodimer. The cofactor is pyridoxal 5'-phosphate.

The protein localises to the plastid. Its subcellular location is the chloroplast. The catalysed reaction is L-aspartate + 2-oxoglutarate = oxaloacetate + L-glutamate. It catalyses the reaction L-arogenate + oxaloacetate = prephenate + L-aspartate. The enzyme catalyses L-arogenate + 2-oxoglutarate = prephenate + L-glutamate. It participates in amino-acid biosynthesis; L-phenylalanine biosynthesis; L-arogenate from prephenate (L-Asp route): step 1/1. It functions in the pathway amino-acid biosynthesis; L-phenylalanine biosynthesis; L-arogenate from prephenate (L-Glu route): step 1/1. Functionally, prokaryotic-type aspartate aminotransferase. Also has a prenate transaminase activity. Involved in the aromatic amino acids biosynthesis pathway via the arogenate route. Required for the transamination of prephenate into arogenate. Required for early development of the embryo. In Arabidopsis thaliana (Mouse-ear cress), this protein is Bifunctional aspartate aminotransferase and glutamate/aspartate-prephenate aminotransferase (PAT).